The primary structure comprises 366 residues: S-adenosylmethionine:tRNA ribosyltransferase-isomerase (366 aa).

It belongs to the QueA family. In terms of assembly, monomer.

The protein resides in the cytoplasm. It catalyses the reaction 7-aminomethyl-7-carbaguanosine(34) in tRNA + S-adenosyl-L-methionine = epoxyqueuosine(34) in tRNA + adenine + L-methionine + 2 H(+). It participates in tRNA modification; tRNA-queuosine biosynthesis. Functionally, transfers and isomerizes the ribose moiety from AdoMet to the 7-aminomethyl group of 7-deazaguanine (preQ1-tRNA) to give epoxyqueuosine (oQ-tRNA). The sequence is that of S-adenosylmethionine:tRNA ribosyltransferase-isomerase from Caulobacter vibrioides (strain ATCC 19089 / CIP 103742 / CB 15) (Caulobacter crescentus).